The following is a 112-amino-acid chain: Integration host factor subunit alpha (112 aa).

Belongs to the bacterial histone-like protein family. Heterodimer of an alpha and a beta chain.

Its function is as follows. This protein is one of the two subunits of integration host factor, a specific DNA-binding protein that functions in genetic recombination as well as in transcriptional and translational control. This Agrobacterium fabrum (strain C58 / ATCC 33970) (Agrobacterium tumefaciens (strain C58)) protein is Integration host factor subunit alpha.